Here is a 138-residue protein sequence, read N- to C-terminus: Large ribosomal subunit protein uL16 (138 aa).

The protein belongs to the universal ribosomal protein uL16 family. As to quaternary structure, part of the 50S ribosomal subunit.

Functionally, binds 23S rRNA and is also seen to make contacts with the A and possibly P site tRNAs. The chain is Large ribosomal subunit protein uL16 from Ureaplasma parvum serovar 3 (strain ATCC 27815 / 27 / NCTC 11736).